An 804-amino-acid polypeptide reads, in one-letter code: MSHADMNNCCGFNEAAAAFSWNSPKKAINPYLDPAEVAPVSALSNLITLYAADNEQEQLRREALSDQVWERYFFYESRDPVQHEMEQDKLISRAKLAHEQQRFNPDMVILADVNAQPSHISKPLMQRIEYFSSLGRPKAYSRYLRETIKPCLERLEHVRDSQLSASFRFMASHVGLDGLLILPEMSQDQVKRLSTLVAAHMSMCLDAACGDLYATDDVKPEEIRKTWEKVAAETLRLDVIPPAFEQLRRKRNRRKPVPYELIPGSLARMLCADWWYRKLWKMRCEWREEQLRAVCLVSKKASPYVSYEAVMHKREQRRKSLEFFRSHELVNEEGDTLDMEDVVNASSSNPAHRRNEMMACVKGLELIAEMRGDCAVFYTITCPSRFHSTLNNGRPNPTWTNATVRQSSDYLVGMFAAFRKAMHKAGLRWYGVRVAEPHHDGTVHWHLLCFMRKKDRRAITALLRKFAIREDREELGNNTGPRFKSELINPRKGTPTSYIAKYISKNIDGRGLAGEISKETGKSLRDNAEYVNPWASLHRVQQFRFFGIPGRQAYRELRLLAGQAARQQGDKKAGAPVLDNPRLDAILAAADAGCFATYIMRQGGVLVPRKYHLIRTAYEINEEPTAYGDHGIRIYGIWSPIAEGKICTHAVKWKMVRKAVDVQEAAADQGACAPWTRGNNCLLAENLNQQEKDKSADGNPRTDITSMDDKELHDYLHSMSKKERRELAARLRLVKPKRRKDYKQRITDHQRLQLVYELKSRGFDGSEKEVDLLLRGGSIPSGAGLRIFYRNQRLQEDDQWRNLY.

Active-site O-(5'-phospho-DNA)-tyrosine intermediate residues include tyrosine 498 and tyrosine 502.

Belongs to the phage GPA family.

Functionally, possible endonuclease which induces a single-strand cut and initiates DNA replication. This chain is Probable replication endonuclease from prophage-like region, found in Shigella boydii serotype 4 (strain Sb227).